A 449-amino-acid chain; its full sequence is UDP-glycosyltransferase 74F2 (449 aa).

UDP-alpha-D-glucose-binding positions include S273, 325–327 (SPQ), 342–350 (HCGWNSTME), and 364–367 (WTDQ).

This sequence belongs to the UDP-glycosyltransferase family. Expressed in seedlings.

In terms of biological role, glycosyltransferase that glucosylates benzoic acid and derivatives. Substrate preference is benzoic acid &gt; salicylic acid (SA) &gt; 3-hydroxybenzoic acid &gt; 4-hydroxybenzoic acid. Catalyzes the formation of both SA 2-O-beta-D-glucoside (SAG) and SA glucose ester (SGE). Has high affinity for the tryptophan precursor anthranilate. Catalyzes the formation of anthranilate glucose ester. Is the major source of this activity in the plant. The protein is UDP-glycosyltransferase 74F2 (UGT74F2) of Arabidopsis thaliana (Mouse-ear cress).